The chain runs to 372 residues: Alpha-parvin (372 aa).

The disordered stretch occupies residues 1–31; that stretch reads MATSPQKSPLVPKSPTPKSPPSRKKDDSFLG. N-acetylalanine is present on A2. Phosphoserine is present on residues S8, S14, and S19. Residues 21–25 form an interaction with ARHGAP31 region; sequence PSRKK. A phosphoserine mark is found at S28 and S62. Calponin-homology (CH) domains lie at 95-202 and 262-369; these read QELM…QYFR and NVVK…TKYR. The required for interaction with TESK1 and ILK stretch occupies residues 223–372; the sequence is GILQSRQIQE…NLFTKYRNVE (150 aa).

The protein belongs to the parvin family. Component of the heterotrimeric IPP (ILK-PINCH-PARVIN) complex composed of ILK, LIMS1/PINCH and PARVA; the complex binds to F-actin via the C-terminal tail of LIMS1 and the N-terminal region of PARVA, promoting F-actin filament bundling. Interacts with TGFB1I1. Interacts with ARHGAP31. Interacts with the actin cytoskeleton. Interacts (via C-terminus) with TESK1 (via C-terminus); the interaction inhibits TESK1 kinase activity. Interacts with PXN/PAXILLIN (via LD motif 4).

The protein resides in the cell junction. Its subcellular location is the focal adhesion. It is found in the cell membrane. The protein localises to the cytoplasm. It localises to the cytoskeleton. The protein resides in the myofibril. Its subcellular location is the sarcomere. It is found in the z line. Its function is as follows. Plays a role in sarcomere organization and in smooth muscle cell contraction. Required for normal development of the embryonic cardiovascular system, and for normal septation of the heart outflow tract. Plays a role in sprouting angiogenesis and is required for normal adhesion of vascular smooth muscle cells to endothelial cells during blood vessel development. Plays a role in the reorganization of the actin cytoskeleton, formation of lamellipodia and ciliogenesis. Plays a role in the establishment of cell polarity, cell adhesion, cell spreading, and directed cell migration. Within the IPP (ILK-PINCH-PARVIN) complex, binds to F-actin, promoting F-actin bundling, a process required to generate force for actin cytoskeleton reorganization and subsequent dynamic cell adhesion events such as cell spreading and migration. The chain is Alpha-parvin (Parva) from Mus musculus (Mouse).